The primary structure comprises 463 residues: Soluble pyridine nucleotide transhydrogenase (463 aa).

An FAD-binding site is contributed by 35–44; sequence EDKPTVGGNC.

It belongs to the class-I pyridine nucleotide-disulfide oxidoreductase family. FAD serves as cofactor.

It is found in the cytoplasm. The catalysed reaction is NAD(+) + NADPH = NADH + NADP(+). Conversion of NADPH, generated by peripheral catabolic pathways, to NADH, which can enter the respiratory chain for energy generation. The chain is Soluble pyridine nucleotide transhydrogenase from Marinobacter nauticus (strain ATCC 700491 / DSM 11845 / VT8) (Marinobacter aquaeolei).